The following is an 83-amino-acid chain: Transmembrane protein EP84R (83 aa).

The next 2 helical transmembrane spans lie at 31-51 (IIGVILLVISLLFIFIGIIIL) and 59-79 (TGSIFVVLSLILGGGGFFLIY).

The protein belongs to the asfivirus EP84R family.

Its subcellular location is the virion membrane. This chain is Transmembrane protein EP84R, found in Ornithodoros (relapsing fever ticks).